Reading from the N-terminus, the 1204-residue chain is E3 ubiquitin-protein ligase DZIP3 (1204 aa).

Disordered regions lie at residues 1 to 22 and 640 to 681; these read MDSL…QTKE and SIPS…EQVS. Over residues 649-658 the composition is skewed to basic and acidic residues; it reads SVKDLQEVKS. The segment covering 659–668 has biased composition (basic residues); the sequence is KTKKKKRTKS. Coiled coils occupy residues 746-861 and 906-941; these read KETE…TSRA and QLKA…KVKQ. Basic and acidic residues predominate over residues 1088–1098; sequence PKKSESEEKSA. The tract at residues 1088 to 1141 is disordered; it reads PKKSESEEKSAQDGNNASPSHTASQPNAPQDPKSAQGSATWEGDKDMDNEEEEE. Residues 1099-1126 are compositionally biased toward polar residues; sequence QDGNNASPSHTASQPNAPQDPKSAQGSA. Residues 1132 to 1141 are compositionally biased toward acidic residues; the sequence is KDMDNEEEEE. The RING-type; atypical zinc finger occupies 1144-1184; that stretch reads CVICHENLSPENLSVLPCAHKFHSQCIRPWLMQQGTCPTCR.

Probably interacts with DAZL.

It localises to the cytoplasm. The enzyme catalyses S-ubiquitinyl-[E2 ubiquitin-conjugating enzyme]-L-cysteine + [acceptor protein]-L-lysine = [E2 ubiquitin-conjugating enzyme]-L-cysteine + N(6)-ubiquitinyl-[acceptor protein]-L-lysine.. It functions in the pathway protein modification; protein ubiquitination. Its function is as follows. E3 Ubiquitin ligase proteins mediate ubiquitination and subsequent proteasomal degradation of target proteins. E3 ubiquitin ligases accept ubiquitin from an E2 ubiquitin-conjugating enzyme in the form of a thioester and then directly transfers the ubiquitin to targeted substrates. Able to specifically bind RNA. This is E3 ubiquitin-protein ligase DZIP3 (Dzip3) from Mus musculus (Mouse).